Reading from the N-terminus, the 364-residue chain is Fructose-bisphosphate aldolase A (364 aa).

A Phosphothreonine modification is found at Thr9. Ser36 and Ser39 each carry phosphoserine. Lys42 is modified (N6-acetyllysine; alternate). Lys42 participates in a covalent cross-link: Glycyl lysine isopeptide (Lys-Gly) (interchain with G-Cter in SUMO1); alternate. Residue Lys42 forms a Glycyl lysine isopeptide (Lys-Gly) (interchain with G-Cter in SUMO2); alternate linkage. A beta-D-fructose 1,6-bisphosphate-binding site is contributed by Arg43. Position 46 is a phosphoserine (Ser46). Residue Lys99 is modified to N6-(2-hydroxyisobutyryl)lysine. Lys108 carries the N6-acetyllysine modification. Lys111 bears the N6-acetyllysine; alternate mark. At Lys111 the chain carries N6-malonyllysine; alternate. Residue Ser132 is modified to Phosphoserine. Lys147 carries the N6-(2-hydroxyisobutyryl)lysine modification. Residue Glu188 is the Proton acceptor of the active site. Lys230 functions as the Schiff-base intermediate with dihydroxyacetone-P in the catalytic mechanism. At Ser272 the chain carries Phosphoserine. Beta-D-fructose 1,6-bisphosphate-binding positions include 272–274, Ser301, and Arg304; that span reads SGG. Position 312 is an N6-malonyllysine (Lys312). N6-acetyllysine is present on Lys330. Asn361 is modified (deamidated asparagine; in form beta).

Belongs to the class I fructose-bisphosphate aldolase family. In terms of assembly, homotetramer. Interacts with SNX9 and WAS. Interacts with FBP2; the interaction blocks FBP2 inhibition by physiological concentrations of AMP and reduces inhibition by Ca(2+). Post-translationally, asn-361 in form alpha is deaminated to Asp in form beta.

The protein localises to the cytoplasm. It is found in the myofibril. It localises to the sarcomere. The protein resides in the i band. Its subcellular location is the m line. It catalyses the reaction beta-D-fructose 1,6-bisphosphate = D-glyceraldehyde 3-phosphate + dihydroxyacetone phosphate. Its pathway is carbohydrate degradation; glycolysis; D-glyceraldehyde 3-phosphate and glycerone phosphate from D-glucose: step 4/4. Plays a key role in glycolysis and gluconeogenesis. In addition, may also function as scaffolding protein. This Oryctolagus cuniculus (Rabbit) protein is Fructose-bisphosphate aldolase A (ALDOA).